The chain runs to 256 residues: Ribosomal RNA small subunit methyltransferase J (256 aa).

S-adenosyl-L-methionine is bound by residues 104-105 (RD), 120-121 (ER), 156-157 (SS), and D174.

This sequence belongs to the methyltransferase superfamily. RsmJ family.

It localises to the cytoplasm. The enzyme catalyses guanosine(1516) in 16S rRNA + S-adenosyl-L-methionine = N(2)-methylguanosine(1516) in 16S rRNA + S-adenosyl-L-homocysteine + H(+). In terms of biological role, specifically methylates the guanosine in position 1516 of 16S rRNA. The polypeptide is Ribosomal RNA small subunit methyltransferase J (Yersinia pseudotuberculosis serotype O:3 (strain YPIII)).